The sequence spans 248 residues: Inhibitor of growth protein 4 (248 aa).

Residues 25 to 118 adopt a coiled-coil conformation; that stretch reads FQLMRDLDQR…ADLKEKQIES (94 aa). N6-acetyllysine is present on residues lysine 112, lysine 127, and lysine 129. A disordered region spans residues 115–160; that stretch reads QIESSDYDSSSSKGKKSRTQKEKKAARARSKGKNSDEEAPKAAQKK. The Bipartite nuclear localization signal motif lies at 127–147; sequence KGKKSRTQKEKKAARARSKGK. Citrulline is present on arginine 132. Lysine 145, lysine 147, and lysine 155 each carry N6-acetyllysine. Arginine 165 bears the Citrulline mark. A PHD-type zinc finger spans residues 195–244; it reads PTYCLCHQVSYGEMIGCDNPDCSIERFHFACVGLTTKPRGKWFCPRCSQE. Residues cysteine 198, cysteine 200, cysteine 211, cysteine 216, histidine 222, cysteine 225, cysteine 238, and cysteine 241 each contribute to the Zn(2+) site.

This sequence belongs to the ING family. As to quaternary structure, homodimer. Component of the HBO1 complex composed of KAT7/HBO1, MEAF6, ING4 or ING5, and one scaffold subunit: complexes containing BRPF scaffold (BRPF1, BRD1/BRPF2 or BRPF3) direct KAT7/HBO1 specificity towards H3K14ac, while complexes containing JADE scaffold (JADE1, JADE2 and JADE3) mediate acetylation of histone H4. Interacts with H3K4me3 and to a lesser extent with H3K4me2, the interaction augments KAT7/HBO1 acetylation activity on H3 tails. Interacts with EP300, RELA and TP53; these interactions may be indirect. Interacts with EGLN1. Interacts with BCL2A1. Post-translationally, citrullination by PADI4 within the nuclear localization signal disrupts the interaction with p53 and increases susceptibility to degradation.

It localises to the nucleus. Functionally, component of HBO1 complexes, which specifically mediate acetylation of histone H3 at 'Lys-14' (H3K14ac), and have reduced activity toward histone H4. Through chromatin acetylation it may function in DNA replication. May inhibit tumor progression by modulating the transcriptional output of signaling pathways which regulate cell proliferation. Can suppress brain tumor angiogenesis through transcriptional repression of RELA/NFKB3 target genes when complexed with RELA. May also specifically suppress loss of contact inhibition elicited by activated oncogenes such as MYC. Represses hypoxia inducible factor's (HIF) activity by interacting with HIF prolyl hydroxylase 2 (EGLN1). Can enhance apoptosis induced by serum starvation in mammary epithelial cell line HC11. The sequence is that of Inhibitor of growth protein 4 (ING4) from Bos taurus (Bovine).